The chain runs to 298 residues: Palmitoyl-protein thioesterase 1 (298 aa).

Positions methionine 1 to alanine 16 are cleaved as a signal peptide. N-linked (GlcNAc...) asparagine glycosylation occurs at asparagine 20. 3 cysteine pairs are disulfide-bonded: cysteine 37–cysteine 38, cysteine 88–cysteine 120, and cysteine 144–cysteine 151. The Nucleophile role is filled by serine 107. Residue aspartate 224 is part of the active site. Asparagine 250 carries an N-linked (GlcNAc...) asparagine glycan. Residue histidine 280 is part of the active site.

The protein belongs to the palmitoyl-protein thioesterase family.

The catalysed reaction is S-hexadecanoyl-L-cysteinyl-[protein] + H2O = L-cysteinyl-[protein] + hexadecanoate + H(+). Removes thioester-linked fatty acyl groups such as palmitate (hexadecanoate) from modified cysteine residues in proteins or peptides. The sequence is that of Palmitoyl-protein thioesterase 1 (ppt-1) from Caenorhabditis elegans.